Consider the following 309-residue polypeptide: Foldase protein PrsA (309 aa).

A signal peptide spans 1–22 (MKTRSKLAAGFLTLMSVATLAA). The N-palmitoyl cysteine moiety is linked to residue C23. A lipid anchor (S-diacylglycerol cysteine) is attached at C23. One can recognise a PpiC domain in the interval 146-241 (TPETSVQVIK…TSYYIIKVTD (96 aa)).

This sequence belongs to the PrsA family.

The protein localises to the cell membrane. It catalyses the reaction [protein]-peptidylproline (omega=180) = [protein]-peptidylproline (omega=0). Its function is as follows. Plays a major role in protein secretion by helping the post-translocational extracellular folding of several secreted proteins. In Streptococcus agalactiae serotype V (strain ATCC BAA-611 / 2603 V/R), this protein is Foldase protein PrsA.